Reading from the N-terminus, the 98-residue chain is NADH-ubiquinone oxidoreductase chain 4L (98 aa).

The next 3 helical transmembrane spans lie at 2-22 (PSIS…MLMF), 29-49 (SLLC…LIIL), and 61-81 (ILLL…LVMI).

It belongs to the complex I subunit 4L family. As to quaternary structure, core subunit of respiratory chain NADH dehydrogenase (Complex I) which is composed of 45 different subunits.

It is found in the mitochondrion inner membrane. The enzyme catalyses a ubiquinone + NADH + 5 H(+)(in) = a ubiquinol + NAD(+) + 4 H(+)(out). Its function is as follows. Core subunit of the mitochondrial membrane respiratory chain NADH dehydrogenase (Complex I) which catalyzes electron transfer from NADH through the respiratory chain, using ubiquinone as an electron acceptor. Part of the enzyme membrane arm which is embedded in the lipid bilayer and involved in proton translocation. The chain is NADH-ubiquinone oxidoreductase chain 4L (MT-ND4L) from Mirza coquereli (Coquerel's giant mouse lemur).